A 123-amino-acid polypeptide reads, in one-letter code: Large ribosomal subunit protein bL12 (123 aa).

Belongs to the bacterial ribosomal protein bL12 family. Homodimer. Part of the ribosomal stalk of the 50S ribosomal subunit. Forms a multimeric L10(L12)X complex, where L10 forms an elongated spine to which 2 to 4 L12 dimers bind in a sequential fashion. Binds GTP-bound translation factors.

Its function is as follows. Forms part of the ribosomal stalk which helps the ribosome interact with GTP-bound translation factors. Is thus essential for accurate translation. This is Large ribosomal subunit protein bL12 from Rhodopseudomonas palustris (strain BisB18).